The following is a 167-amino-acid chain: Small ribosomal subunit protein uS5 (167 aa).

The S5 DRBM domain occupies 12–75 (LEDQVVSINR…DAAKKSLIEV (64 aa)).

The protein belongs to the universal ribosomal protein uS5 family. As to quaternary structure, part of the 30S ribosomal subunit. Contacts proteins S4 and S8.

With S4 and S12 plays an important role in translational accuracy. Functionally, located at the back of the 30S subunit body where it stabilizes the conformation of the head with respect to the body. The chain is Small ribosomal subunit protein uS5 from Lacticaseibacillus paracasei (strain ATCC 334 / BCRC 17002 / CCUG 31169 / CIP 107868 / KCTC 3260 / NRRL B-441) (Lactobacillus paracasei).